Reading from the N-terminus, the 458-residue chain is tRNA modification GTPase MnmE (458 aa).

The (6S)-5-formyl-5,6,7,8-tetrahydrofolate site is built by Arg-22, Glu-84, and Arg-123. One can recognise a TrmE-type G domain in the interval 220–379 (GIATAIIGRP…LEKAIADLFF (160 aa)). Asn-230 contacts K(+). GTP is bound by residues 230–235 (NVGKSS), 249–255 (TDIAGTT), and 274–277 (DTAG). Ser-234 contributes to the Mg(2+) binding site. K(+) is bound by residues Thr-249, Ile-251, and Thr-254. Thr-255 is a binding site for Mg(2+). Residue Lys-458 participates in (6S)-5-formyl-5,6,7,8-tetrahydrofolate binding.

The protein belongs to the TRAFAC class TrmE-Era-EngA-EngB-Septin-like GTPase superfamily. TrmE GTPase family. Homodimer. Heterotetramer of two MnmE and two MnmG subunits. Requires K(+) as cofactor.

Its subcellular location is the cytoplasm. Its function is as follows. Exhibits a very high intrinsic GTPase hydrolysis rate. Involved in the addition of a carboxymethylaminomethyl (cmnm) group at the wobble position (U34) of certain tRNAs, forming tRNA-cmnm(5)s(2)U34. The polypeptide is tRNA modification GTPase MnmE (Bacillus cytotoxicus (strain DSM 22905 / CIP 110041 / 391-98 / NVH 391-98)).